Here is a 352-residue protein sequence, read N- to C-terminus: MGRHSCCFKQKLRKGLWSPEEDEKLLNYITRHGHGCWSSVPKLAGLQRCGKSCRLRWINYLRPDLKRGAFSQDEESLIIELHAALGNRWSQIATRLPGRTDNEIKNFWNSCLKKKLRRKGIDPTTHKPLITNELQSLNVIDQKLTSSEVVKSTGSINNLHDQSMVVSSQQGPWWFPANTTTTNQNSAFCFSSSNTTTVSDQIVSLISSMSTSSSPTPMTSNFSPAPNNWEQLNYCNTVPSQSNSIYSAFFGNQYTEASQTMNNNNPLVDQHHHHQDMKSWASEILHYTEHNQSSETVIEAEVKPDIANYYWRSASSSSSPNQEAATLLHDANVEVYGKNLQKLNNMVFDQSL.

2 consecutive HTH myb-type domains span residues 9–61 (KQKL…INYL) and 62–116 (RPDL…KKKL). 2 consecutive DNA-binding regions (H-T-H motif) follow at residues 37-61 (WSSVPKLAGLQRCGKSCRLRWINYL) and 89-112 (WSQIATRLPGRTDNEIKNFWNSCL).

In terms of tissue distribution, expressed in stems, flowers and seeds. Weakly expressed in leaves and roots.

The protein localises to the nucleus. Probable transcription factor. This chain is Transcription factor MYB86 (MYB86), found in Arabidopsis thaliana (Mouse-ear cress).